Here is a 313-residue protein sequence, read N- to C-terminus: Probable cell division protein WhiA (313 aa).

The H-T-H motif DNA-binding region spans 278-311; that stretch reads SLKELGKLLDPPLSKSGVNHRLRRIKSIANEIRG.

Belongs to the WhiA family.

Its function is as follows. Involved in cell division and chromosome segregation. The sequence is that of Probable cell division protein WhiA from Halothermothrix orenii (strain H 168 / OCM 544 / DSM 9562).